We begin with the raw amino-acid sequence, 112 residues long: Large ribosomal subunit protein eL30x (112 aa).

This sequence belongs to the eukaryotic ribosomal protein eL30 family.

The protein is Large ribosomal subunit protein eL30x (RPL30C) of Arabidopsis thaliana (Mouse-ear cress).